We begin with the raw amino-acid sequence, 957 residues long: Glycine dehydrogenase (decarboxylating) 2 (957 aa).

K707 is subject to N6-(pyridoxal phosphate)lysine.

Belongs to the GcvP family. In terms of assembly, the glycine cleavage system is composed of four proteins: P, T, L and H. Requires pyridoxal 5'-phosphate as cofactor.

It carries out the reaction N(6)-[(R)-lipoyl]-L-lysyl-[glycine-cleavage complex H protein] + glycine + H(+) = N(6)-[(R)-S(8)-aminomethyldihydrolipoyl]-L-lysyl-[glycine-cleavage complex H protein] + CO2. The glycine cleavage system catalyzes the degradation of glycine. The P protein binds the alpha-amino group of glycine through its pyridoxal phosphate cofactor; CO(2) is released and the remaining methylamine moiety is then transferred to the lipoamide cofactor of the H protein. The polypeptide is Glycine dehydrogenase (decarboxylating) 2 (gcvP2) (Pseudomonas putida (strain ATCC 47054 / DSM 6125 / CFBP 8728 / NCIMB 11950 / KT2440)).